The chain runs to 830 residues: Lon protease 3 (830 aa).

In terms of domain architecture, Lon N-terminal spans 19–213 (VPLLPLRDII…RLIELMQAEI (195 aa)). 367-374 (GPPGVGKT) contributes to the ATP binding site. Residues 604-784 (RDEVGLVNGL…DDVLREALIL (181 aa)) form the Lon proteolytic domain. Active-site residues include Ser690 and Lys733. Over residues 811–823 (PVKAPPAAAGEPT) the composition is skewed to low complexity. A disordered region spans residues 811-830 (PVKAPPAAAGEPTPAAPPGA).

This sequence belongs to the peptidase S16 family. As to quaternary structure, homohexamer. Organized in a ring with a central cavity.

It localises to the cytoplasm. It carries out the reaction Hydrolysis of proteins in presence of ATP.. ATP-dependent serine protease that mediates the selective degradation of mutant and abnormal proteins as well as certain short-lived regulatory proteins. Required for cellular homeostasis and for survival from DNA damage and developmental changes induced by stress. Degrades polypeptides processively to yield small peptide fragments that are 5 to 10 amino acids long. Binds to DNA in a double-stranded, site-specific manner. This Sorangium cellulosum (strain So ce56) (Polyangium cellulosum (strain So ce56)) protein is Lon protease 3.